We begin with the raw amino-acid sequence, 409 residues long: 5-aminolevulinate synthase (409 aa).

Residues Arg21 and Ser136 each coordinate substrate. Ser188, His216, and Thr244 together coordinate pyridoxal 5'-phosphate. Lys247 is an active-site residue. The residue at position 247 (Lys247) is an N6-(pyridoxal phosphate)lysine. Pyridoxal 5'-phosphate is bound by residues Thr276 and Thr277. Position 362 (Thr362) interacts with substrate.

The protein belongs to the class-II pyridoxal-phosphate-dependent aminotransferase family. In terms of assembly, homodimer. The cofactor is pyridoxal 5'-phosphate.

It catalyses the reaction succinyl-CoA + glycine + H(+) = 5-aminolevulinate + CO2 + CoA. The protein operates within porphyrin-containing compound metabolism; protoporphyrin-IX biosynthesis; 5-aminolevulinate from glycine: step 1/1. The chain is 5-aminolevulinate synthase (hemA) from Bradyrhizobium diazoefficiens (strain JCM 10833 / BCRC 13528 / IAM 13628 / NBRC 14792 / USDA 110).